The sequence spans 394 residues: Elongation factor Tu (394 aa).

Residues 10-204 (KPHVNVGTIG…ALDTYIPEPE (195 aa)) enclose the tr-type G domain. The G1 stretch occupies residues 19–26 (GHVDHGKT). Residue 19–26 (GHVDHGKT) coordinates GTP. Residue T26 coordinates Mg(2+). Residues 60–64 (GITIN) are G2. The tract at residues 81 to 84 (DCPG) is G3. GTP contacts are provided by residues 81–85 (DCPGH) and 136–139 (NKCD). The interval 136–139 (NKCD) is G4. A G5 region spans residues 174–176 (SAL).

It belongs to the TRAFAC class translation factor GTPase superfamily. Classic translation factor GTPase family. EF-Tu/EF-1A subfamily. Monomer.

It localises to the cytoplasm. The enzyme catalyses GTP + H2O = GDP + phosphate + H(+). In terms of biological role, GTP hydrolase that promotes the GTP-dependent binding of aminoacyl-tRNA to the A-site of ribosomes during protein biosynthesis. In Colwellia psychrerythraea (strain 34H / ATCC BAA-681) (Vibrio psychroerythus), this protein is Elongation factor Tu.